Consider the following 1190-residue polypeptide: MKEEASEHGGSADETQELSPVSDSSDEMPNNAKRRRRSQSMIANKRIHQAFQEDEGDEDWEEEEHKPKAKRRYNTRSNESFSEGDDEPFEVSESSALEDELSDSEDSFIRSVRSKPKYKPGTRRSTRLRNRRSQDEEESEEEHRPILRERTSRINYSVPLAFPPVDEMDGDPSSQVNQSRSRKTHSELAITKLLRQQVSSFMPYIDSSGSESESDNTRIKKSSAKTIKALTDPANSGGPPDFGRIREKSDLADSDPLGVDSSLSFESVGGLDNYINQLKEMVMLPLLYPEIFQRFNMQPPRGVLFHGPPGTGKTLMARALAAACSSENKKVSFYMRKGADCLSKWVGEAERQLRLLFEEAKSTQPSIIFFDEIDGLAPVRSSKQEQIHASIVSTLLALMDGMESRGQVIIIGATNRPDAVDPALRRPGRFDREFYFPLPDRDARKKIIEIHTRNWDPPVPEWLCSMLAEKSKGYGGADLRALCTEAALNSIKRTYPQLYRSTKRLQIDPKTIKVKVKDFVMSMKRMIPSSERSSISPSKPLSPELKPLLNEAFQDIEKTLQKLMPVASKLNPLEEVMYDDPKENDFEYQQRLETFETLRIYKPRFLICGRKGLGQTALGPAILQQYEGVHVQSFDMSTLLQDSTQSIETSIIHLFLEVRRHTPSIIYIPDIDNWLNVLPLTAITTFSSMLERLDFSDQILFLALSSSPLSELHPQLREWFSSKQSVYSLQYPTRDSIIAFFQPILELIKASPTELPGGIPRKRRVLPELPLAPDPPPFTSQKITLKQTKQADMRLLNKLKIKLNALLGSLRARYRKFKKPLIDFNDIYCVDPETGHSYRSREECHYEFVDDVVKQIGSDQKFSMMSLEEIEKRTWDNCYCTPKQFVHDIKLILRDALQLEDSETIKRAQEMYANVLLGVEDMEDDQFSQRCERMALREAERRKLRHGKLQKHLDETKADMQFTSEKPSVDESITEVDDAIKDGPPVLAETLTNSLMEDVGPENVDMDIEDNEIFTNQSTMSVPSMLVENEESPKPDEYIDQKDKVQSPLLNGKSPVGVPSEAALRVSTDVSTNISSNGRADIPVDTLITSPADVPNNAPTDAHNITSADGHIENIEQEVVFPDLVFDEDRLTPLKQLLIDSTTGFTVDQLLHLHSFLYQIIWNTKSEWNRNSVVDECERAVKEFMINALQ.

Positions 1–11 (MKEEASEHGGS) are enriched in basic and acidic residues. 2 disordered regions span residues 1–185 (MKEE…RKTH) and 204–253 (YIDS…DLAD). Composition is skewed to acidic residues over residues 52 to 62 (QEDEGDEDWEE) and 82 to 106 (SEGD…DSED). Residues 112 to 131 (VRSKPKYKPGTRRSTRLRNR) show a composition bias toward basic residues. The span at 141–152 (EEHRPILRERTS) shows a compositional bias: basic and acidic residues. Residue 309 to 314 (PGTGKT) coordinates ATP. A Bromo domain is found at 794–922 (RLLNKLKIKL…ANVLLGVEDM (129 aa)).

Belongs to the AAA ATPase family. In terms of assembly, homohexamer. Interacts with the FACT complex subunits spt16 and pob3. Interacts with histone H3-H4 (via N-terminus).

The protein resides in the nucleus. Its subcellular location is the chromosome. It carries out the reaction ATP + H2O = ADP + phosphate + H(+). In terms of biological role, ATPase histone chaperone which facilitates loading of histone H3-H4 onto DNA in an ATP-dependent manner. Plays a genome-wide role in nucleosome organization and establishment of chromatin. Also plays a role in heterochromatin assembly by stabilizing recruitment of the histone methyltransferase clr4 to methylated histone H3, to promote the transition from H3K9me2 to H3K9me3. This chain is ATPase histone chaperone abo1, found in Schizosaccharomyces pombe (strain 972 / ATCC 24843) (Fission yeast).